A 176-amino-acid chain; its full sequence is Prenylated Rab acceptor 1 (176 aa).

At Met1 the chain carries N-acetylmethionine. The SKL peroxisome targeting motif signature appears at Ser11 to Phe13. Phosphoserine is present on Ser18. The next 2 membrane-spanning stretches (helical) occupy residues Leu84 to Ile104 and Val129 to Ile149.

Belongs to the PRA1 family. As to quaternary structure, interacts with YIP1 and the Rab GTPases SEC4, YPT1, YPT6, YPT10, YPT11, YPT31, YPT32 and YPT52.

The protein localises to the golgi apparatus membrane. Its subcellular location is the peroxisome membrane. The polypeptide is Prenylated Rab acceptor 1 (YIP3) (Saccharomyces cerevisiae (strain ATCC 204508 / S288c) (Baker's yeast)).